The chain runs to 481 residues: Glutamyl-tRNA(Gln) amidotransferase subunit A (481 aa).

Active-site charge relay system residues include Lys76 and Ser151. Catalysis depends on Ser175, which acts as the Acyl-ester intermediate.

It belongs to the amidase family. GatA subfamily. In terms of assembly, heterotrimer of A, B and C subunits.

It carries out the reaction L-glutamyl-tRNA(Gln) + L-glutamine + ATP + H2O = L-glutaminyl-tRNA(Gln) + L-glutamate + ADP + phosphate + H(+). In terms of biological role, allows the formation of correctly charged Gln-tRNA(Gln) through the transamidation of misacylated Glu-tRNA(Gln) in organisms which lack glutaminyl-tRNA synthetase. The reaction takes place in the presence of glutamine and ATP through an activated gamma-phospho-Glu-tRNA(Gln). The polypeptide is Glutamyl-tRNA(Gln) amidotransferase subunit A (Chlorobaculum parvum (strain DSM 263 / NCIMB 8327) (Chlorobium vibrioforme subsp. thiosulfatophilum)).